The chain runs to 283 residues: MAQTLAQTKQISQSHTFDVSQSHHKTPDDTNSHSVIYSTQNLDLWYGENHALQNINLDIYENQITAIIGPSGCGKSTYIKTLNRMVELVPSVKTAGKILYRDQDIFDQKYSKEQLRTNVGMVFQQPNPFPKSIYDNITYGPKIHGIKNKKVLDEIVEKSLRGAAIWDELKDRLHTNAYSLSGGQQQRVCIARCLAIEPEVILMDEPTSALDPISTLRVEELVQELKEKYTIIMVTHNMQQAARVSDKTAFFLNGYVNEYDDTDKIFSNPSNKKTEDYISGRFG.

Residues 1-20 are compositionally biased toward polar residues; it reads MAQTLAQTKQISQSHTFDVS. The tract at residues 1–32 is disordered; it reads MAQTLAQTKQISQSHTFDVSQSHHKTPDDTNS. Residues 37-278 enclose the ABC transporter domain; it reads YSTQNLDLWY…PSNKKTEDYI (242 aa). 69–76 is a binding site for ATP; it reads GPSGCGKS.

This sequence belongs to the ABC transporter superfamily. Phosphate importer (TC 3.A.1.7) family. The complex is composed of two ATP-binding proteins (PstB), two transmembrane proteins (PstC and PstA) and a solute-binding protein (PstS).

It localises to the cell membrane. The catalysed reaction is phosphate(out) + ATP + H2O = ADP + 2 phosphate(in) + H(+). Functionally, part of the ABC transporter complex PstSACB involved in phosphate import. Responsible for energy coupling to the transport system. This is Phosphate import ATP-binding protein PstB from Staphylococcus aureus (strain USA300).